The primary structure comprises 40 residues: Photosystem II reaction center protein J (40 aa).

A helical membrane pass occupies residues 8–28 (IPLCLIGTVAGIAVIGLVGVF).

It belongs to the PsbJ family. PSII is composed of 1 copy each of membrane proteins PsbA, PsbB, PsbC, PsbD, PsbE, PsbF, PsbH, PsbI, PsbJ, PsbK, PsbL, PsbM, PsbT, PsbX, PsbY, PsbZ, Psb30/Ycf12, at least 3 peripheral proteins of the oxygen-evolving complex and a large number of cofactors. It forms dimeric complexes.

It is found in the plastid. It localises to the chloroplast thylakoid membrane. One of the components of the core complex of photosystem II (PSII). PSII is a light-driven water:plastoquinone oxidoreductase that uses light energy to abstract electrons from H(2)O, generating O(2) and a proton gradient subsequently used for ATP formation. It consists of a core antenna complex that captures photons, and an electron transfer chain that converts photonic excitation into a charge separation. The chain is Photosystem II reaction center protein J from Triticum aestivum (Wheat).